The primary structure comprises 427 residues: Phosphatase PSR1 (427 aa).

2 S-palmitoyl cysteine lipidation sites follow: Cys9 and Cys10. Residues Thr14–Asn34 are compositionally biased toward polar residues. Residues Thr14–Glu223 are disordered. A compositionally biased stretch (basic residues) spans Arg35–Gly48. Residues Val49 to Asn80 are compositionally biased toward polar residues. The segment covering Lys104–Lys118 has biased composition (basic and acidic residues). Position 110 is a phosphoserine (Ser110). Over residues Tyr119–Glu130 the composition is skewed to acidic residues. Basic and acidic residues predominate over residues Asp131 to Arg151. Lys154 is covalently cross-linked (Glycyl lysine isopeptide (Lys-Gly) (interchain with G-Cter in ubiquitin)). Over residues Gln155–Gln183 the composition is skewed to low complexity. Residues Arg184 to Ser214 show a composition bias toward polar residues. The FCP1 homology domain occupies Ser253–Leu411.

As to quaternary structure, interacts with WHI2.

The protein resides in the cell membrane. Has phosphatase activity in vitro. Involved in the response to sodium and lithium ion stress (but not to potassium or sorbitol stress) by inducing transcription of the sodium pump ENA1/PMR2. Acts through a calcineurin-independent pathway and is functionally redundant with PSR2. Also involved in the general stress response; acts together with WHI2 to activate stress response element (STRE)-mediated gene expression, possibly through dephosphorylation of MSN2. The polypeptide is Phosphatase PSR1 (PSR1) (Saccharomyces cerevisiae (strain ATCC 204508 / S288c) (Baker's yeast)).